The primary structure comprises 379 residues: Protein RecA (379 aa).

79–86 (GPESSGKT) lines the ATP pocket.

It belongs to the RecA family.

The protein localises to the cytoplasm. Can catalyze the hydrolysis of ATP in the presence of single-stranded DNA, the ATP-dependent uptake of single-stranded DNA by duplex DNA, and the ATP-dependent hybridization of homologous single-stranded DNAs. It interacts with LexA causing its activation and leading to its autocatalytic cleavage. The polypeptide is Protein RecA (Streptococcus agalactiae serotype III (strain NEM316)).